Consider the following 1302-residue polypeptide: MERDEVSTSSSEGKSQEEAPMAEGLEPTEPIAFLKLFRFSTYGEIGWLFFGFIMCCIKALTLPAVVIIYSEFTSMLVDRAMQFGTSSNVHALPLFGGGKTLTNASREENNEALYDDSISYGILLTIASVVMFISGIFSVDVFNMVALRQVTRMRIKLFSSVIRQDIGWHDLASKQNFTQSMVDDVEKIRDGISEKVGHFVYLVVGFIITVAISFSYGWKLTLAVSSYIPLVILLNYYVAKFQGKLTAREQESYAGAGNLAEEILSSIRTVVSFGGEKSEVQRYENFLVPARKASQWKGAFSGLSDAVLKSMLYLSCAGAFWYGVNLIIDDRNVENKEYTPAILMIAFFGIIVGADNIARTAPFLESFATARGCATNLFKVIDLTSKIDPLSTDGKLLNYGLRGDVEFQDVFFRYPSRPEVIVHRGLNIRIRAGQTVALVGSSGCGKSTCVQLLQRFYDPVFGSVLLDDLDIRKYNIQWLRSNIAVVGQEPVLFLGTIAQNISYGKPGATQKEIEAAATQAGAHEFITNLPESYRSMIGERGSQLSGGQKQRIAIARALIQNPKILLLDEATSALDYQSEKQVQQALDLASKGRTTIVVSHRLSAIRGADKIVFIHDGKVLEEGSHDDLMALEGAYYNMVRAGDINMPDEVEKEDSIEDTKQKSLALFEKSFETSPLNFEKGQKNSVQFEEPIIKALIKDTNAQSAEAPPEKPNFFRTFSRILQLAKQEWCYLILGTISAVAVGFLYPAFAVIFGEFYAALAEKDPEDALRRTAVLSWACLGLAFLTGLVCFLQTYLFNYAGIWLTTRMRAMTFNAMVNQEVGWFDDENNSVGALSARLSGEAVDIQGAIGYPLSGMIQALSNFISSVSVAMYYNWKLALLCLANCPIIVGSVILEAKMMSNAVVREKQVIEEACRIATESITNIRTVAGLRREADVIREYTEEIQRVEVLIRQKLRWRGVLNSTMQASAFFAYAVALCYGGVLVSEGQLPFQDIIKVSETLLYGSMMLAQSLAFTPAFSAALIAGHRLFQILDRKPKIQSPMGTIKNTLAKQLNLFEGVRYRGIQFRYPTRPDAKILNGLDLEVLKGQTVALVGHSGCGKSTCVQLLQRYYDPDEGTIHIDHDDIQHDLTLDGVRTKLGIVSQEPTLFERSIAENIAYGDNRRSVSMVEIIAAAKSANAHSFIISLPNGYDTRMGARGTQLSGGQKQRIAIARALVRNPKILLLDEATSALDLQSEQLVQQALDTACSGRTCIVIAHRLSTVQNADVICVIQNGQVVEQGNHMQLISQGGIYAKLHKTQKDH.

The interval 1–23 (MERDEVSTSSSEGKSQEEAPMAE) is disordered. Residues 1-48 (MERDEVSTSSSEGKSQEEAPMAEGLEPTEPIAFLKLFRFSTYGEIGWL) lie on the Cytoplasmic side of the membrane. The region spanning 48–369 (LFFGFIMCCI…TAPFLESFAT (322 aa)) is the ABC transmembrane type-1 1 domain. Residues 49–69 (FFGFIMCCIKALTLPAVVIIY) traverse the membrane as a helical segment. Residues 70–118 (SEFTSMLVDRAMQFGTSSNVHALPLFGGGKTLTNASREENNEALYDDSI) are Extracellular-facing. A glycan (N-linked (GlcNAc...) asparagine) is linked at Asn-103. A helical transmembrane segment spans residues 119 to 147 (SYGILLTIASVVMFISGIFSVDVFNMVAL). Topologically, residues 148 to 194 (RQVTRMRIKLFSSVIRQDIGWHDLASKQNFTQSMVDDVEKIRDGISE) are cytoplasmic. A helical transmembrane segment spans residues 195 to 215 (KVGHFVYLVVGFIITVAISFS). Residues 216-223 (YGWKLTLA) lie on the Extracellular side of the membrane. The helical transmembrane segment at 224–242 (VSSYIPLVILLNYYVAKFQ) threads the bilayer. Topologically, residues 243-302 (GKLTAREQESYAGAGNLAEEILSSIRTVVSFGGEKSEVQRYENFLVPARKASQWKGAFSG) are cytoplasmic. A helical transmembrane segment spans residues 303–323 (LSDAVLKSMLYLSCAGAFWYG). The Extracellular portion of the chain corresponds to 324-341 (VNLIIDDRNVENKEYTPA). Residues 342-362 (ILMIAFFGIIVGADNIARTAP) traverse the membrane as a helical segment. Over 363–731 (FLESFATARG…LQLAKQEWCY (369 aa)) the chain is Cytoplasmic. The ABC transporter 1 domain occupies 405-641 (VEFQDVFFRY…EGAYYNMVRA (237 aa)). Position 440 to 447 (440 to 447 (GSSGCGKS)) interacts with ATP. Residues 732–753 (LILGTISAVAVGFLYPAFAVIF) form a helical membrane-spanning segment. Positions 732 to 1020 (LILGTISAVA…SLAFTPAFSA (289 aa)) constitute an ABC transmembrane type-1 2 domain. Topologically, residues 754-776 (GEFYAALAEKDPEDALRRTAVLS) are extracellular. A helical transmembrane segment spans residues 777-798 (WACLGLAFLTGLVCFLQTYLFN). At 799 to 852 (YAGIWLTTRMRAMTFNAMVNQEVGWFDDENNSVGALSARLSGEAVDIQGAIGYP) the chain is on the cytoplasmic side. A helical transmembrane segment spans residues 853-873 (LSGMIQALSNFISSVSVAMYY). Position 874 (Asn-874) is a topological domain, extracellular. The chain crosses the membrane as a helical span at residues 875–894 (WKLALLCLANCPIIVGSVIL). The Cytoplasmic portion of the chain corresponds to 895-956 (EAKMMSNAVV…VEVLIRQKLR (62 aa)). The helical transmembrane segment at 957–977 (WRGVLNSTMQASAFFAYAVAL) threads the bilayer. At 978–993 (CYGGVLVSEGQLPFQD) the chain is on the extracellular side. A helical membrane pass occupies residues 994-1014 (IIKVSETLLYGSMMLAQSLAF). Over 1015-1302 (TPAFSAALIA…AKLHKTQKDH (288 aa)) the chain is Cytoplasmic. Residues 1059-1298 (VRYRGIQFRY…GGIYAKLHKT (240 aa)) enclose the ABC transporter 2 domain. 1094 to 1101 (GHSGCGKS) contributes to the ATP binding site.

The protein belongs to the ABC transporter superfamily. ABCB family. Multidrug resistance exporter (TC 3.A.1.201) subfamily.

It is found in the membrane. It carries out the reaction ATP + H2O + xenobioticSide 1 = ADP + phosphate + xenobioticSide 2.. The sequence is that of Multidrug resistance protein homolog 65 (Mdr65) from Drosophila melanogaster (Fruit fly).